We begin with the raw amino-acid sequence, 138 residues long: Putative pre-16S rRNA nuclease (138 aa).

It belongs to the YqgF nuclease family.

Its subcellular location is the cytoplasm. Could be a nuclease involved in processing of the 5'-end of pre-16S rRNA. The protein is Putative pre-16S rRNA nuclease of Carboxydothermus hydrogenoformans (strain ATCC BAA-161 / DSM 6008 / Z-2901).